The sequence spans 279 residues: MIDGHTKLAGVMGWPVEHSRSPLMHNHWCRVNGVNGAYVPLPTHPHGFDQALRGLAAAGFQGVNVTIPHKEAAMLACDELTPTAKRAGAVNTICFVAGRIIGDCTDGTGFCDNLSAHDVAIAGRAMVLGAGGAARAVAAALLDRGCEVVIANRTLERAEALVEALGGGEAVAWYEWPSLLSGCSLLVNATSMGMGGKAGLDWDAALREAAPGLCVTDIVYTPRETPLLLAAQARGLRTVDGLGMLVHQARAGFRAWFGVDPQADRTTFDLLAASLRTDA.

Shikimate-binding positions include 19–21 (SRS) and Thr66. The active-site Proton acceptor is the Lys70. Asn91 and Asp106 together coordinate shikimate. NADP(+) is bound by residues 129–133 (GAGGA), 152–157 (NRTLER), and Ile218. Tyr220 contacts shikimate. Gly241 is a binding site for NADP(+).

The protein belongs to the shikimate dehydrogenase family. As to quaternary structure, homodimer.

The catalysed reaction is shikimate + NADP(+) = 3-dehydroshikimate + NADPH + H(+). It participates in metabolic intermediate biosynthesis; chorismate biosynthesis; chorismate from D-erythrose 4-phosphate and phosphoenolpyruvate: step 4/7. Involved in the biosynthesis of the chorismate, which leads to the biosynthesis of aromatic amino acids. Catalyzes the reversible NADPH linked reduction of 3-dehydroshikimate (DHSA) to yield shikimate (SA). The sequence is that of Shikimate dehydrogenase (NADP(+)) from Gluconobacter oxydans (strain 621H) (Gluconobacter suboxydans).